The sequence spans 37 residues: Cytochrome b6-f complex subunit 5 (37 aa).

The helical transmembrane segment at 5–25 threads the bilayer; the sequence is LLSGIVLGLIVVTLSGLFYAA.

This sequence belongs to the PetG family. In terms of assembly, the 4 large subunits of the cytochrome b6-f complex are cytochrome b6, subunit IV (17 kDa polypeptide, PetD), cytochrome f and the Rieske protein, while the 4 small subunits are PetG, PetL, PetM and PetN. The complex functions as a dimer.

Its subcellular location is the cellular thylakoid membrane. Component of the cytochrome b6-f complex, which mediates electron transfer between photosystem II (PSII) and photosystem I (PSI), cyclic electron flow around PSI, and state transitions. PetG is required for either the stability or assembly of the cytochrome b6-f complex. This is Cytochrome b6-f complex subunit 5 from Trichormus variabilis (strain ATCC 29413 / PCC 7937) (Anabaena variabilis).